The sequence spans 607 residues: Arginine--tRNA ligase (607 aa).

The short motif at 147–157 (PNIAKEMHVGH) is the 'HIGH' region element.

This sequence belongs to the class-I aminoacyl-tRNA synthetase family. As to quaternary structure, monomer.

It is found in the cytoplasm. It carries out the reaction tRNA(Arg) + L-arginine + ATP = L-arginyl-tRNA(Arg) + AMP + diphosphate. This Prochlorococcus marinus (strain NATL2A) protein is Arginine--tRNA ligase.